The chain runs to 118 residues: Ribulose bisphosphate carboxylase small subunit (118 aa).

This sequence belongs to the RuBisCO small chain family. In terms of assembly, heterohexadecamer of 8 large and 8 small subunits.

It localises to the carboxysome. RuBisCO catalyzes two reactions: the carboxylation of D-ribulose 1,5-bisphosphate, the primary event in carbon dioxide fixation, as well as the oxidative fragmentation of the pentose substrate in the photorespiration process. Both reactions occur simultaneously and in competition at the same active site. Although the small subunit is not catalytic it is essential for maximal activity. This Thermosynechococcus vestitus (strain NIES-2133 / IAM M-273 / BP-1) protein is Ribulose bisphosphate carboxylase small subunit.